The sequence spans 128 residues: Cytochrome c' (128 aa).

Residues Gln13, Gln17, Glu69, Thr70, Cys118, Cys121, and His122 each coordinate heme c.

Binds 1 heme c group covalently per subunit.

Cytochrome c' is the most widely occurring bacterial c-type cytochrome. Cytochromes c' are high-spin proteins and the heme has no sixth ligand. Their exact function is not known. This is Cytochrome c' from Magnetospirillum fulvum (Rhodospirillum fulvum).